Reading from the N-terminus, the 391-residue chain is 1-deoxy-D-xylulose 5-phosphate reductoisomerase (391 aa).

Residues Thr11, Gly12, Ser13, Ile14, and Asn126 each coordinate NADPH. Position 127 (Lys127) interacts with 1-deoxy-D-xylulose 5-phosphate. Glu128 is an NADPH binding site. Residue Asp152 participates in Mn(2+) binding. Residues Ser153, Glu154, Ser176, and His199 each coordinate 1-deoxy-D-xylulose 5-phosphate. Glu154 is a binding site for Mn(2+). Gly205 serves as a coordination point for NADPH. Positions 212, 217, 218, and 221 each coordinate 1-deoxy-D-xylulose 5-phosphate. Glu221 is a Mn(2+) binding site.

The protein belongs to the DXR family. Requires Mg(2+) as cofactor. Mn(2+) is required as a cofactor.

The enzyme catalyses 2-C-methyl-D-erythritol 4-phosphate + NADP(+) = 1-deoxy-D-xylulose 5-phosphate + NADPH + H(+). It participates in isoprenoid biosynthesis; isopentenyl diphosphate biosynthesis via DXP pathway; isopentenyl diphosphate from 1-deoxy-D-xylulose 5-phosphate: step 1/6. In terms of biological role, catalyzes the NADPH-dependent rearrangement and reduction of 1-deoxy-D-xylulose-5-phosphate (DXP) to 2-C-methyl-D-erythritol 4-phosphate (MEP). The protein is 1-deoxy-D-xylulose 5-phosphate reductoisomerase of Acidithiobacillus ferrooxidans (strain ATCC 53993 / BNL-5-31) (Leptospirillum ferrooxidans (ATCC 53993)).